The following is a 241-amino-acid chain: Uridylate kinase (241 aa).

Position 15–18 (15–18) interacts with ATP; the sequence is KLSG. The tract at residues 23–28 is involved in allosteric activation by GTP; sequence GAEGFG. Residue glycine 57 coordinates UMP. Residues glycine 58 and arginine 62 each coordinate ATP. UMP-binding positions include aspartate 77 and 138–145; that span reads TGNPFFTT. Residues threonine 165, tyrosine 171, and aspartate 174 each contribute to the ATP site.

This sequence belongs to the UMP kinase family. In terms of assembly, homohexamer.

Its subcellular location is the cytoplasm. It catalyses the reaction UMP + ATP = UDP + ADP. It participates in pyrimidine metabolism; CTP biosynthesis via de novo pathway; UDP from UMP (UMPK route): step 1/1. Allosterically activated by GTP. Inhibited by UTP. Catalyzes the reversible phosphorylation of UMP to UDP. This is Uridylate kinase from Yersinia pseudotuberculosis serotype O:1b (strain IP 31758).